Here is a 221-residue protein sequence, read N- to C-terminus: Leucine rich adaptor protein 1-like (221 aa).

The residue at position 1 (methionine 1) is an N-acetylmethionine. Residues 24 to 81 (LARSLRGEELAPREGAADPSGVGGSCSSSSSCSSFAPSVSSSSSSSPASGSPRRSHPS) are disordered. The segment covering 28 to 39 (LRGEELAPREGA) has biased composition (basic and acidic residues). A compositionally biased stretch (low complexity) spans 48–75 (SCSSSSSCSSFAPSVSSSSSSSPASGSP).

The polypeptide is Leucine rich adaptor protein 1-like (Lurap1l) (Mus musculus (Mouse)).